The chain runs to 429 residues: MFVDQVKIYVKAGNGGDGMVAFRREKFVPNGGPAGGDGGKGADVVFVVDEGLRTLVDFRFKRIFKAEHGEHGMSKSMHGRGAEDLVVKVPQGTIVKDIDTGEIIADLVAHGQRAVIAKAGRGGRGNKRFATPANPAPELSENGEPGQERNVQLELKVLADVGLVGFPSVGKSTLLSVVSAARPKIAAYHFTTIVPNLGMVDAGDGRSFVMADLPGLIEGASQGVGLGHQFLRHIERTRVIVHVIDMSGSEGRVPYEDYMAINNELEQYNLRLMERPQIIVANKMDMPEAEENLKEFKTKIAEDIPVFPISAVTKTGLRELLLAIADKLETTPEFPLNEILEQEDEDTVLYKYIAEEPDFEITREPDGTFVLSGTKIERLFTMTNFERDASISRFARQLRAMGVDEALRKRGAKDGDIVRLLDYEFEFMD.

Residues 1-158 (MFVDQVKIYV…RNVQLELKVL (158 aa)) form the Obg domain. The tract at residues 124 to 145 (RGNKRFATPANPAPELSENGEP) is disordered. The 171-residue stretch at 159 to 329 (ADVGLVGFPS…LLLAIADKLE (171 aa)) folds into the OBG-type G domain. GTP is bound by residues 165–172 (GFPSVGKS), 190–194 (FTTIV), 212–215 (DLPG), 282–285 (NKMD), and 310–312 (SAV). Positions 172 and 192 each coordinate Mg(2+). Residues 351–429 (KYIAEEPDFE…LLDYEFEFMD (79 aa)) enclose the OCT domain.

It belongs to the TRAFAC class OBG-HflX-like GTPase superfamily. OBG GTPase family. As to quaternary structure, monomer. It depends on Mg(2+) as a cofactor.

It localises to the cytoplasm. An essential GTPase which binds GTP, GDP and possibly (p)ppGpp with moderate affinity, with high nucleotide exchange rates and a fairly low GTP hydrolysis rate. Plays a role in control of the cell cycle, stress response, ribosome biogenesis and in those bacteria that undergo differentiation, in morphogenesis control. This is GTPase Obg from Listeria welshimeri serovar 6b (strain ATCC 35897 / DSM 20650 / CCUG 15529 / CIP 8149 / NCTC 11857 / SLCC 5334 / V8).